A 121-amino-acid polypeptide reads, in one-letter code: Large ribosomal subunit protein bL19 (121 aa).

Belongs to the bacterial ribosomal protein bL19 family.

This protein is located at the 30S-50S ribosomal subunit interface and may play a role in the structure and function of the aminoacyl-tRNA binding site. This Gloeobacter violaceus (strain ATCC 29082 / PCC 7421) protein is Large ribosomal subunit protein bL19.